We begin with the raw amino-acid sequence, 379 residues long: Zinc metalloproteinase nas-20 (379 aa).

The N-terminal stretch at 1-20 is a signal peptide; it reads MKITVNFLLVALIGVPSVLS. Positions 21 to 29 are excised as a propeptide; it reads DRHITRDKR. The region spanning 30–208 is the Peptidase M12A domain; that stretch reads QAMRDYAKWE…VLLNKFYGCN (179 aa). An N-linked (GlcNAc...) asparagine glycan is attached at asparagine 67. Intrachain disulfides connect cysteine 70–cysteine 207, cysteine 91–cysteine 111, cysteine 209–cysteine 229, and cysteine 234–cysteine 243. Histidine 119 contributes to the Zn(2+) binding site. Glutamate 120 is an active-site residue. Positions 123 and 129 each coordinate Zn(2+). Asparagine 185 carries N-linked (GlcNAc...) asparagine glycosylation. An EGF-like domain is found at 203–244; it reads KFYGCNCDNHPRKLDCKNGGYQNPANCEECLCTDGFNGQLCD. Asparagine 337 and asparagine 370 each carry an N-linked (GlcNAc...) asparagine glycan.

Zn(2+) is required as a cofactor.

The protein localises to the secreted. In terms of biological role, metalloprotease. The sequence is that of Zinc metalloproteinase nas-20 (nas-20) from Caenorhabditis elegans.